The following is a 235-amino-acid chain: Carbohydrate deacetylase (235 aa).

Mg(2+) contacts are provided by His-61 and His-124.

Belongs to the YdjC deacetylase family. It depends on Mg(2+) as a cofactor.

Probably catalyzes the deacetylation of acetylated carbohydrates an important step in the degradation of oligosaccharides. The sequence is that of Carbohydrate deacetylase from Bacillus cereus (strain B4264).